A 31-amino-acid chain; its full sequence is Electron transfer flavoprotein-ubiquinone oxidoreductase (31 aa).

11–25 (VVIVGAGGAGLSAAI) lines the FAD pocket.

As to quaternary structure, monomer. It depends on [4Fe-4S] cluster as a cofactor. Requires FAD as cofactor.

It catalyses the reaction a ubiquinone + reduced [electron-transfer flavoprotein] = a ubiquinol + oxidized [electron-transfer flavoprotein] + H(+). Its function is as follows. Accepts electrons from ETF and reduces ubiquinone. The chain is Electron transfer flavoprotein-ubiquinone oxidoreductase from Paracoccus denitrificans.